A 324-amino-acid chain; its full sequence is Pseudouridylate synthase RPUSD4, mitochondrial (324 aa).

Residues 1-11 constitute a mitochondrion transit peptide; the sequence is MAAAGGGATRG. The active site involves Asp-105.

It belongs to the pseudouridine synthase RluA family.

The protein localises to the mitochondrion matrix. It localises to the nucleus. Its subcellular location is the cytoplasm. It catalyses the reaction uridine in 5S rRNA = pseudouridine in 5S rRNA. It carries out the reaction a uridine in tRNA = a pseudouridine in tRNA. The enzyme catalyses a uridine in mRNA = a pseudouridine in mRNA. Its function is as follows. Catalyzes uridine to pseudouridine isomerization (pseudouridylation) of different mitochondrial RNA substrates. Acts on position 1397 in 16S mitochondrial ribosomal RNA (16S mt-rRNA). This modification is required for the assembly of 16S mt-rRNA into a functional mitochondrial ribosome. Acts on position 39 in mitochondrial tRNA(Phe). Also catalyzes pseudouridylation of mRNAs in nucleus: acts as a regulator of pre-mRNA splicing by mediating pseudouridylation of pre-mRNAs at locations associated with alternatively spliced regions. Pseudouridylation of pre-mRNAs near splice sites directly regulates mRNA splicing and mRNA 3'-end processing. This chain is Pseudouridylate synthase RPUSD4, mitochondrial, found in Xenopus tropicalis (Western clawed frog).